Reading from the N-terminus, the 509-residue chain is Cysteine--tRNA ligase (509 aa).

Cysteine 19 lines the Zn(2+) pocket. The short motif at 21 to 31 (PTVYNDAHIGH) is the 'HIGH' region element. Zn(2+) is bound by residues cysteine 213, histidine 238, and glutamate 242. The short motif at 284–288 (KMSKS) is the 'KMSKS' region element. Lysine 287 provides a ligand contact to ATP.

Belongs to the class-I aminoacyl-tRNA synthetase family. Zn(2+) is required as a cofactor.

It carries out the reaction tRNA(Cys) + L-cysteine + ATP = L-cysteinyl-tRNA(Cys) + AMP + diphosphate. In Acanthamoeba polyphaga (Amoeba), this protein is Cysteine--tRNA ligase (CARS).